We begin with the raw amino-acid sequence, 501 residues long: Sugar phosphate exchanger 3 (501 aa).

A helical transmembrane segment spans residues 20–40; sequence CTHHHIVVFLLTFFSYSLLHA. The N-linked (GlcNAc...) asparagine glycan is linked to Asn-62. Transmembrane regions (helical) follow at residues 87-107, 119-139, 153-173, 183-203, and 214-234; these read TLFL…GLFV, WVLS…GTLT, LWVV…AVMG, FVFG…AFLA, and AFLV…CGLL. The N-linked (GlcNAc...) asparagine glycan is linked to Asn-273. The next 6 membrane-spanning stretches (helical) occupy residues 298–320, 340–360, 364–384, 393–413, 435–455, and 459–479; these read GVVL…FFWL, IWYD…SDVL, APVL…YSRS, VIMA…SSAI, GIVD…VSLI, and LGWM…ILFI.

This sequence belongs to the major facilitator superfamily. Organophosphate:Pi antiporter (OPA) (TC 2.A.1.4) family.

The protein localises to the endoplasmic reticulum membrane. Its subcellular location is the lysosome membrane. Functionally, unlike the other SLC37 members, seems to lack glucose-6-phosphate antiporter activity. The chain is Sugar phosphate exchanger 3 (SLC37A3) from Gallus gallus (Chicken).